The sequence spans 77 residues: UPF0349 protein lwe2340 (77 aa).

It belongs to the UPF0349 family.

In Listeria welshimeri serovar 6b (strain ATCC 35897 / DSM 20650 / CCUG 15529 / CIP 8149 / NCTC 11857 / SLCC 5334 / V8), this protein is UPF0349 protein lwe2340.